The sequence spans 286 residues: Bifunctional protein FolD (286 aa).

NADP(+) is bound by residues 164–166 (GRS), serine 193, and isoleucine 234.

The protein belongs to the tetrahydrofolate dehydrogenase/cyclohydrolase family. As to quaternary structure, homodimer.

The enzyme catalyses (6R)-5,10-methylene-5,6,7,8-tetrahydrofolate + NADP(+) = (6R)-5,10-methenyltetrahydrofolate + NADPH. It catalyses the reaction (6R)-5,10-methenyltetrahydrofolate + H2O = (6R)-10-formyltetrahydrofolate + H(+). It functions in the pathway one-carbon metabolism; tetrahydrofolate interconversion. In terms of biological role, catalyzes the oxidation of 5,10-methylenetetrahydrofolate to 5,10-methenyltetrahydrofolate and then the hydrolysis of 5,10-methenyltetrahydrofolate to 10-formyltetrahydrofolate. The polypeptide is Bifunctional protein FolD (Nitratidesulfovibrio vulgaris (strain ATCC 29579 / DSM 644 / CCUG 34227 / NCIMB 8303 / VKM B-1760 / Hildenborough) (Desulfovibrio vulgaris)).